A 372-amino-acid chain; its full sequence is N-methyl-L-tryptophan oxidase (372 aa).

An FAD-binding site is contributed by 4–34; it reads DLIIIGSGSVGAAAGYYATRAGLKVLMTDAH. An S-8alpha-FAD cysteine modification is found at Cys-307.

Belongs to the MSOX/MTOX family. MTOX subfamily. In terms of assembly, monomer. FAD serves as cofactor.

The catalysed reaction is N(alpha)-methyl-L-tryptophan + O2 + H2O = L-tryptophan + formaldehyde + H2O2. In terms of biological role, catalyzes the oxidative demethylation of N-methyl-L-tryptophan. This Salmonella typhi protein is N-methyl-L-tryptophan oxidase.